Reading from the N-terminus, the 1898-residue chain is Receptor-type tyrosine-protein phosphatase F (1898 aa).

An N-terminal signal peptide occupies residues 1–29 (MTPEPAPGRTMVPLVPALVMLGLVAGAHG). The Extracellular portion of the chain corresponds to 30–1254 (DSKPVFVKVP…QQQEEPELLW (1225 aa)). Ig-like C2-type domains lie at 33–123 (PVFV…AKLS), 135–224 (PSID…ANLY), and 232–314 (PRFS…AQVT). Cys54 and Cys107 are oxidised to a cystine. 68 to 77 (KKGKKVSSQR) lines the heparin pocket. Asn117 carries an N-linked (GlcNAc...) asparagine glycan. Cysteines 156 and 207 form a disulfide. N-linked (GlcNAc...) asparagine glycosylation is found at Asn250 and Asn295. Cys253 and Cys298 are joined by a disulfide. Fibronectin type-III domains lie at 321-411 (PPID…TGEQ), 416-510 (PPRR…TQQG), 514-604 (QPAD…TAQS), 609-706 (PPQK…TDED), 711-810 (PPRK…TTGA), 811-905 (VPGR…PEDV), 909-1001 (FPQN…TMPV), and 1005-1089 (FAKN…TAPD). A disordered region spans residues 399 to 418 (PPSEAVRARTGEQAPSSPPR). The disordered stretch occupies residues 693 to 713 (GPESSPVLVRTDEDVPSGPPR). Residue Asn721 is glycosylated (N-linked (GlcNAc...) asparagine). N-linked (GlcNAc...) asparagine glycosylation is found at Asn941 and Asn957. Residues 1255 to 1275 (VTGPVLAVILIVLIVIAILLF) traverse the membrane as a helical segment. Residues 1276–1898 (KRKRTHSPSS…YLGSFDHYAT (623 aa)) are Cytoplasmic-facing. Position 1296 is a phosphoserine (Ser1296). 2 Tyrosine-protein phosphatase domains span residues 1343–1598 (FSQE…LLEA) and 1630–1889 (MELE…ALEY). Substrate-binding positions include Asp1507, 1539 to 1545 (CSAGVGR), and Gln1583. Cys1539 (phosphocysteine intermediate) is an active-site residue. The active-site Phosphocysteine intermediate is Cys1830.

Belongs to the protein-tyrosine phosphatase family. Receptor class 2A subfamily. Interacts with GRIP1. Interacts with PPFIA1, PPFIA2 and PPFIA3. Interacts with INSR.

Its subcellular location is the membrane. It catalyses the reaction O-phospho-L-tyrosyl-[protein] + H2O = L-tyrosyl-[protein] + phosphate. Its function is as follows. Possible cell adhesion receptor. It possesses an intrinsic protein tyrosine phosphatase activity (PTPase) and dephosphorylates EPHA2 regulating its activity. The first PTPase domain has enzymatic activity, while the second one seems to affect the substrate specificity of the first one. The chain is Receptor-type tyrosine-protein phosphatase F (PTPRF) from Bos taurus (Bovine).